A 570-amino-acid polypeptide reads, in one-letter code: Urease subunit alpha (570 aa).

The Urease domain occupies 131 to 570; sequence GGIDSHIHFI…LPMTQRYFLF (440 aa). Ni(2+) contacts are provided by His136, His138, and Lys219. At Lys219 the chain carries N6-carboxylysine. His221 lines the substrate pocket. Ni(2+) is bound by residues His248 and His274. The Proton donor role is filled by His322. Asp362 contributes to the Ni(2+) binding site.

It belongs to the metallo-dependent hydrolases superfamily. Urease alpha subunit family. Heterotrimer of UreA (gamma), UreB (beta) and UreC (alpha) subunits. Three heterotrimers associate to form the active enzyme. It depends on Ni cation as a cofactor. Post-translationally, carboxylation allows a single lysine to coordinate two nickel ions.

It is found in the cytoplasm. The enzyme catalyses urea + 2 H2O + H(+) = hydrogencarbonate + 2 NH4(+). Its pathway is nitrogen metabolism; urea degradation; CO(2) and NH(3) from urea (urease route): step 1/1. This chain is Urease subunit alpha, found in Trichodesmium erythraeum (strain IMS101).